A 555-amino-acid chain; its full sequence is Developmental and secondary metabolism regulator veA (555 aa).

3 disordered regions span residues 1 to 23 (MATR…RITR), 39 to 60 (ERAR…VDPP), and 234 to 533 (RRRG…TLLS). Over residues 13–23 (ETEHSVSRITR) the composition is skewed to basic and acidic residues. Residues 25 to 228 (GKRITYKLNV…AEQGCRVRIR (204 aa)) enclose the Velvet domain. Positions 39–44 (ERARAC) match the Nuclear localization signal motif. Residues 239 to 258 (KRSDDYDFDEERSHRGRIPD) show a composition bias toward basic and acidic residues. Positions 311–331 (AIPPAPAPAPPSSSTPTPVAP) are enriched in pro residues. 2 stretches are compositionally biased toward polar residues: residues 336 to 372 (RSSS…TQVY) and 380 to 389 (HARNPSTSTE). The PEST stretch occupies residues 439–479 (QTPSNAAPSLPPIASISAEYSNNLPQPPSNLAPSPNREPRG). 2 stretches are compositionally biased toward basic and acidic residues: residues 492 to 503 (RPHEDAFSHSER) and 519 to 533 (ADRR…TLLS).

This sequence belongs to the velvet family. VeA subfamily. In terms of assembly, component of the heterotrimeric velvet complex composed of laeA, veA and velB; VeA acting as a bridging protein between laeA and velB.

The protein resides in the nucleus. It is found in the cytoplasm. Component of the velvet transcription factor complex that controls sexual/asexual developmental ratio in response to light, promoting sexual development in the darkness while stimulating asexual sporulation under illumination. The velvet complex hat acts as a global regulator for secondary metabolite gene expression. Increases spore dispersing capacity by impacting conidiophore architecture. The sequence is that of Developmental and secondary metabolism regulator veA from Aspergillus niger (strain ATCC 1015 / CBS 113.46 / FGSC A1144 / LSHB Ac4 / NCTC 3858a / NRRL 328 / USDA 3528.7).